The primary structure comprises 192 residues: Der GTPase-activating protein YihI (192 aa).

Positions 1–12 are enriched in basic residues; that stretch reads MSAKQPNRKPAG. Disordered regions lie at residues 1–87 and 145–192; these read MSAK…IKEK and DTDD…PKKK. The segment covering 13 to 26 has biased composition (basic and acidic residues); it reads KRKESDASAQEGRE. Basic residues predominate over residues 27-36; it reads RKRAAKRKGL. A compositionally biased stretch (acidic residues) spans 145–172; it reads DTDDDEDEADFDEADFDEPGQPASEEEL. Residues 183-192 show a composition bias toward basic and acidic residues; it reads PEPKPEPKKK.

The protein belongs to the YihI family. Interacts with Der.

Its function is as follows. A GTPase-activating protein (GAP) that modifies Der/EngA GTPase function. May play a role in ribosome biogenesis. In Aeromonas hydrophila subsp. hydrophila (strain ATCC 7966 / DSM 30187 / BCRC 13018 / CCUG 14551 / JCM 1027 / KCTC 2358 / NCIMB 9240 / NCTC 8049), this protein is Der GTPase-activating protein YihI.